A 117-amino-acid chain; its full sequence is Toxin CSTX-8 (117 aa).

Residues 1 to 20 (MKVLVICAVLFLAIFSNSSA) form the signal peptide. The propeptide occupies 21–47 (ETEDDFLEDESFQADDVIPFLASEQVR). 4 disulfide bridges follow: C50–C65, C57–C74, C64–C95, and C76–C93. A propeptide spanning residues 82-87 (RSETDR) is cleaved from the precursor. T116 carries the post-translational modification Threonine amide.

The protein belongs to the neurotoxin 19 (CSTX) family. 12 subfamily. Heterodimer of A and B chains; disulfide-linked. Interacts with CSTX-1 (AC P81694), and with CSTX-9 (AC P58604). Expressed by the venom gland.

The protein resides in the secreted. It localises to the target cell membrane. Its function is as follows. Synergistic toxin that induces or increases a cytolytic effect when combined with CSTX-1 (AC P81694) or CSTX-9 (AC P58604). When alone, has a weak insecticidal activity, with an unknown molecular target. The chain is Toxin CSTX-8 from Cupiennius salei (American wandering spider).